A 497-amino-acid polypeptide reads, in one-letter code: MAEFEEDLPHNGLMDGIASGVGVPVEALRLLLTILAGYPVAALYQKFISVIADKTVHHMFFAGCGAGLCYFNYGLDTYHSLIAILTTYFLVLLLRKKTQIFLAINFVFHMSYLLLGYFYTSSNDYDILWTMPHCILVLRMIGYGFDITDGLKEESELSKDQKETALKKPPSLLELLAFSYFPSGFLVGPQFPFRRYKAFVDGEFRQHEGNVEAGVRRFGAGAFYLIVCQVGLRYLPDSYFLTPEFAQVSFVKRIYLLGFWAKFSLYKYISCWLLTEGALICIGLTYKGEDKNGQPDWSGCSNVKLKLLETGNTMEHYVQSFNVNTNQWVGQYIYKRLKFLNNRTISYGAALGFLAVWHGYHSGYYMTFLMEYMVVSTEKQITRFYTKVVLPQWGHILNNSDIYKLLYFITLKSYNVVYMGWCLTAFVFLKYERWIVVYGAVSYYGFTFLVLWAAFYHTFNHFFRSSSRKLAGEDQKLQDSNTDKLVEEKKPEDKKSE.

6 helical membrane passes run 31–51 (LLTI…ISVI), 74–94 (GLDT…VLLL), 100–120 (IFLA…YFYT), 173–193 (LELL…QFPF), 213–235 (AGVR…LRYL), and 264–286 (SLYK…GLTY). Active-site residues include asparagine 322 and histidine 358. The chain crosses the membrane as a helical span at residues 339–361 (FLNNRTISYGAALGFLAVWHGYH). Residue asparagine 398 is glycosylated (N-linked (GlcNAc...) asparagine). Transmembrane regions (helical) follow at residues 408 to 428 (FITL…AFVF) and 435 to 455 (IVVY…WAAF). Residues 469–497 (KLAGEDQKLQDSNTDKLVEEKKPEDKKSE) form a disordered region. Residues 470–497 (LAGEDQKLQDSNTDKLVEEKKPEDKKSE) are compositionally biased toward basic and acidic residues. Serine 480 carries the phosphoserine modification.

This sequence belongs to the membrane-bound acyltransferase family. During gastrulation, expressed mainly along the midline in the presumptive mesoderm. During germ band elongation, expressed in mesoderm and endoderm primordia and in the cephalic furrow. Expression in mesoderm and endoderm lineages continues during germ band shortening. At the end of this process, no longer detected in somatic mesoderm or endoderm layer with expression restricted to anterior and posterior domains of the visceral mesoderm.

It is found in the endoplasmic reticulum. The protein resides in the membrane. It carries out the reaction a 1-acyl-sn-glycero-3-phospho-L-serine + an acyl-CoA = a 1,2-diacyl-sn-glycero-3-phospho-L-serine + CoA. It catalyses the reaction 1-(9Z-octadecenoyl)-sn-glycero-3-phospho-L-serine + (9Z)-hexadecenoyl-CoA = 1-(9Z-octadecenoyl)-2-(9Z-hexadecenoyl)-sn-glycero-3-phospho-L-serine + CoA. The catalysed reaction is a 1-acyl-sn-glycero-3-phosphocholine + an acyl-CoA = a 1,2-diacyl-sn-glycero-3-phosphocholine + CoA. The enzyme catalyses 1-hexadecanoyl-sn-glycero-3-phosphocholine + (9Z)-octadecenoyl-CoA = 1-hexadecanoyl-2-(9Z-octadecenoyl)-sn-glycero-3-phosphocholine + CoA. It carries out the reaction (9Z,12Z)-octadecadienoyl-CoA + 1-hexadecanoyl-sn-glycero-3-phosphocholine = 1-hexadecanoyl-2-(9Z,12Z-octadecadienoyl)-sn-glycero-3-phosphocholine + CoA. It catalyses the reaction (5Z,8Z,11Z,14Z)-eicosatetraenoyl-CoA + 1-hexadecanoyl-sn-glycero-3-phosphocholine = 1-hexadecanoyl-2-(5Z,8Z,11Z,14Z-eicosatetraenoyl)-sn-glycero-3-phosphocholine + CoA. The catalysed reaction is (9Z)-hexadecenoyl-CoA + 1-hexadecanoyl-sn-glycero-3-phosphocholine = 1-hexadecanoyl-2-(9Z-hexadecenoyl)-sn-glycero-3-phosphocholine + CoA. It functions in the pathway lipid metabolism; phospholipid metabolism. Its function is as follows. Acyltransferase that mediates the acylation of lysophospholipids to produce phospholipids (glycerophospholipids). Highest activity with lysophosphatidylcholine (1-acyl-sn-glycero-3-phosphocholine or LPC) producing phosphatidylcholine (1,2-diacyl-sn-glycero-3-phosphocholine or PC) (LPCAT activity), but also converts lysophosphatidylserine (1-acyl-2-hydroxy-sn-glycero-3-phospho-L-serine or LPS) to phosphatidylserine (1,2-diacyl-sn-glycero-3-phospho-L-serine or PS) (LPSAT activity). Has a preference for unsaturated fatty acids of at least 16 carbons such as oleoyl-CoA ((9Z)-octadecenoyl-CoA) and palmitoleoyl-CoA ((9Z)-hexadecenoyl-CoA). Glycerophospholipids are important structural and functional components of cellular membrane, acyl-chain remodeling regulates the molecular species distribution of glycerophospholipids which can affect membrane fluidity and curvature. Essential for fertility and viability together with Oysgedart (Oys). Required for germ cells to migrate into the mesoderm. The polypeptide is Lysophospholipid acyltransferase 5 (Drosophila melanogaster (Fruit fly)).